The primary structure comprises 502 residues: N-sulphoglucosamine sulphohydrolase (502 aa).

The signal sequence occupies residues 1 to 20 (MSCPVPACCALLLVLGLCRA). Ca(2+) is bound by residues Asp31 and Asp32. Asn41 carries an N-linked (GlcNAc...) asparagine glycan. Residue Cys70 coordinates Ca(2+). Cys70 serves as the catalytic Nucleophile. 3-oxoalanine (Cys) is present on Cys70. N-linked (GlcNAc...) asparagine glycosylation is found at Asn142 and Asn151. A disulfide bridge connects residues Cys183 and Cys194. N-linked (GlcNAc...) asparagine glycosylation occurs at Asn264. Residues Asp273 and Asn274 each coordinate Ca(2+). Asn413 carries an N-linked (GlcNAc...) asparagine glycan. The cysteines at positions 481 and 495 are disulfide-linked.

Belongs to the sulfatase family. Ca(2+) serves as cofactor. The conversion to 3-oxoalanine (also known as C-formylglycine, FGly), of a serine or cysteine residue in prokaryotes and of a cysteine residue in eukaryotes, is critical for catalytic activity.

Its subcellular location is the lysosome. The catalysed reaction is N-sulfo-D-glucosamine + H2O = D-glucosamine + sulfate. Functionally, catalyzes a step in lysosomal heparan sulfate degradation. The sequence is that of N-sulphoglucosamine sulphohydrolase (SGSH) from Homo sapiens (Human).